A 66-amino-acid polypeptide reads, in one-letter code: Large ribosomal subunit protein bL33c (66 aa).

It belongs to the bacterial ribosomal protein bL33 family.

The protein localises to the plastid. It is found in the chloroplast. The polypeptide is Large ribosomal subunit protein bL33c (Phalaenopsis aphrodite subsp. formosana (Moth orchid)).